The sequence spans 540 residues: Tyrosinase (540 aa).

The first 19 residues, 1 to 19 (MKSLFLSAVLLQFFETCWS), serve as a signal peptide directing secretion. The Lumenal, melanosome segment spans residues 20–480 (QFPRPCANSE…LQQAQQIWQW (461 aa)). An N-linked (GlcNAc...) asparagine glycan is attached at Asn87. 3 residues coordinate Cu cation: His182, His205, and His214. 3 N-linked (GlcNAc...) asparagine glycosylation sites follow: Asn233, Asn293, and Asn340. 2 residues coordinate Cu cation: His366 and His370. The N-linked (GlcNAc...) asparagine glycan is linked to Asn374. His393 provides a ligand contact to Cu cation. The helical transmembrane segment at 481-501 (LLGAGILGALIATIVAAVIVF) threads the bilayer. At 502 to 540 (ARRKRRRNQKRKRAPSFGERQPLLQSSSEEGSSSYQTTL) the chain is on the cytoplasmic side. A disordered region spans residues 511–540 (KRKRAPSFGERQPLLQSSSEEGSSSYQTTL). Residues 527–540 (SSSEEGSSSYQTTL) are compositionally biased toward low complexity.

This sequence belongs to the tyrosinase family. Cu(2+) serves as cofactor.

The protein localises to the melanosome membrane. It catalyses the reaction 2 L-dopa + O2 = 2 L-dopaquinone + 2 H2O. The catalysed reaction is L-tyrosine + O2 = L-dopaquinone + H2O. This is a copper-containing oxidase that functions in the formation of pigments such as melanins and other polyphenolic compounds. The chain is Tyrosinase (tyr) from Oryzias latipes (Japanese rice fish).